The sequence spans 804 residues: Phenylalanine--tRNA ligase beta subunit (804 aa).

Positions 40-155 constitute a tRNA-binding domain; it reads GEGIKGVVIG…NDAETGSDAL (116 aa). The B5 domain maps to 409 to 484; that stretch reads IEANNIHVSA…RLYGYDNIPS (76 aa). Mg(2+)-binding residues include D462, D468, E471, and E472. The region spanning 710–803 is the FDX-ACB domain; that stretch reads PKYPSVTRDI…LEDTYQAVLR (94 aa).

Belongs to the phenylalanyl-tRNA synthetase beta subunit family. Type 1 subfamily. In terms of assembly, tetramer of two alpha and two beta subunits. It depends on Mg(2+) as a cofactor.

It localises to the cytoplasm. The catalysed reaction is tRNA(Phe) + L-phenylalanine + ATP = L-phenylalanyl-tRNA(Phe) + AMP + diphosphate + H(+). The sequence is that of Phenylalanine--tRNA ligase beta subunit (pheT) from Bacillus subtilis (strain 168).